The primary structure comprises 387 residues: Protein RecA (387 aa).

ATP is bound at residue 80-87 (GPESSGKT). The disordered stretch occupies residues 348–387 (LDDSEVAETEEETTASKTKAKAKKEEKXVETEEIELELQD). 2 stretches are compositionally biased toward acidic residues: residues 349 to 360 (DDSEVAETEEET) and 378 to 387 (TEEIELELQD).

This sequence belongs to the RecA family.

The protein localises to the cytoplasm. Can catalyze the hydrolysis of ATP in the presence of single-stranded DNA, the ATP-dependent uptake of single-stranded DNA by duplex DNA, and the ATP-dependent hybridization of homologous single-stranded DNAs. It interacts with LexA causing its activation and leading to its autocatalytic cleavage. The polypeptide is Protein RecA (Lactococcus lactis subsp. cremoris (Streptococcus cremoris)).